The chain runs to 376 residues: C-type lectin domain family 4 member M (376 aa).

The Cytoplasmic portion of the chain corresponds to 1–49 (MSDSKEPRVQQLGLLEEDPTTSGIRLFPRDFQFQQIHGHKSSTGCLGHG). Residues 14-15 (LL) carry the Endocytosis signal motif. Residues 50-70 (ALVLQLLSFTLLAGVLVAILV) traverse the membrane as a helical; Signal-anchor for type II membrane protein segment. At 71-376 (QVSKVPSSLS…KKPTVCFRDE (306 aa)) the chain is on the extracellular side. Asn-92 carries an N-linked (GlcNAc...) asparagine glycan. Repeat copies occupy residues 108-130 (KLQE…PEKS), 131-153 (KLQE…PEKS), 154-176 (KLQE…PEKS), 177-199 (KLQE…PEKS), 200-222 (KLQE…PDQS), and 223-245 (KQQQ…CRHC). Positions 108–246 (KLQEIYQELT…AFERLCRHCP (139 aa)) are 6 X approximate tandem repeats. Intrachain disulfides connect Cys-242–Cys-372, Cys-245–Cys-256, Cys-273–Cys-366, and Cys-345–Cys-358. Residues 251-367 (FFQGNCYFMS…CDVDNYWICK (117 aa)) form the C-type lectin domain. Ca(2+) contacts are provided by Glu-336, Asn-338, Ser-340, Glu-343, Asn-354, and Asp-355. Asn-338 is a glycosylation site (N-linked (GlcNAc...) asparagine).

Homotetramer.

It is found in the membrane. In terms of biological role, probable pathogen-recognition receptor involved in peripheral immune surveillance in liver. May mediate the endocytosis of pathogens which are subsequently degraded in lysosomal compartments. Probably recognizes in a calcium-dependent manner high mannose N-linked oligosaccharides in a variety of pathogen antigens. Is a receptor for ICAM3, probably by binding to mannose-like carbohydrates. The polypeptide is C-type lectin domain family 4 member M (CLEC4M) (Gorilla gorilla gorilla (Western lowland gorilla)).